Reading from the N-terminus, the 161-residue chain is Urease accessory protein UreE (161 aa).

Belongs to the UreE family.

It is found in the cytoplasm. Its function is as follows. Involved in urease metallocenter assembly. Binds nickel. Probably functions as a nickel donor during metallocenter assembly. This chain is Urease accessory protein UreE, found in Pseudarthrobacter chlorophenolicus (strain ATCC 700700 / DSM 12829 / CIP 107037 / JCM 12360 / KCTC 9906 / NCIMB 13794 / A6) (Arthrobacter chlorophenolicus).